The following is a 345-amino-acid chain: Transcription factor 19 (345 aa).

The FHA domain maps to 31-88 (YRLGHRADLCDVALRPQQEPGLISGIHAELHAEPRGDDWRVSLEDHSSQGTLVNNVRL). At serine 78 the chain carries Phosphoserine. 2 disordered regions span residues 147 to 167 (AGFR…STLS) and 190 to 227 (LTFS…RKSV). Residues 293 to 342 (AAPCCCLPQEETVAWVQCDGCDVWFHVACVGCSIQAAREADFRCPGCRAG) form a PHD-type zinc finger. Residues cysteine 296, cysteine 298, cysteine 310, cysteine 313, histidine 318, cysteine 321, cysteine 336, and cysteine 339 each contribute to the Zn(2+) site.

It localises to the nucleus. Potential transcription factor that may play a role in the regulation of genes involved in cell cycle G1/S transition. May bind to regulatory elements of genes, including the promoter of the transcription factor FOXO1. The polypeptide is Transcription factor 19 (TCF19) (Pan troglodytes (Chimpanzee)).